We begin with the raw amino-acid sequence, 182 residues long: ATP synthase subunit delta (182 aa).

The protein belongs to the ATPase delta chain family. In terms of assembly, F-type ATPases have 2 components, F(1) - the catalytic core - and F(0) - the membrane proton channel. F(1) has five subunits: alpha(3), beta(3), gamma(1), delta(1), epsilon(1). CF(0) has four main subunits: a(1), b(1), b'(1) and c(10-14). The alpha and beta chains form an alternating ring which encloses part of the gamma chain. F(1) is attached to F(0) by a central stalk formed by the gamma and epsilon chains, while a peripheral stalk is formed by the delta, b and b' chains.

The protein localises to the cellular thylakoid membrane. Functionally, f(1)F(0) ATP synthase produces ATP from ADP in the presence of a proton or sodium gradient. F-type ATPases consist of two structural domains, F(1) containing the extramembraneous catalytic core and F(0) containing the membrane proton channel, linked together by a central stalk and a peripheral stalk. During catalysis, ATP synthesis in the catalytic domain of F(1) is coupled via a rotary mechanism of the central stalk subunits to proton translocation. This protein is part of the stalk that links CF(0) to CF(1). It either transmits conformational changes from CF(0) to CF(1) or is implicated in proton conduction. In Synechococcus sp. (strain JA-2-3B'a(2-13)) (Cyanobacteria bacterium Yellowstone B-Prime), this protein is ATP synthase subunit delta.